The chain runs to 335 residues: uncharacterized protein (335 aa).

Positions 1 to 21 (MDKKARAHTVIVCLVGALSLA) are cleaved as a signal peptide. A lipid anchor (N-palmitoyl cysteine) is attached at Cys22. Cys22 carries the S-diacylglycerol cysteine lipid modification.

Its subcellular location is the cell membrane. This is an uncharacterized protein from Treponema pallidum (strain Nichols).